The primary structure comprises 248 residues: Probable transcriptional regulatory protein BH14810 (248 aa).

Belongs to the TACO1 family.

It localises to the cytoplasm. This Bartonella henselae (strain ATCC 49882 / DSM 28221 / CCUG 30454 / Houston 1) (Rochalimaea henselae) protein is Probable transcriptional regulatory protein BH14810.